Consider the following 103-residue polypeptide: MYAIIRDRGMQYRVEPGQVLTIDLLKAEPGSQIELGEVLLVGNGEQVKIGSPLVEGAVVRAEVLGEKKGEKIVVFRYRNKTRYRRRTGHRQRYTQIRISEIVA.

Belongs to the bacterial ribosomal protein bL21 family. Part of the 50S ribosomal subunit. Contacts protein L20.

Its function is as follows. This protein binds to 23S rRNA in the presence of protein L20. The chain is Large ribosomal subunit protein bL21 from Chloroflexus aggregans (strain MD-66 / DSM 9485).